The chain runs to 187 residues: Protein GrpE (187 aa).

Over residues 1-11 the composition is skewed to basic and acidic residues; sequence MTDSSNEHETE. Residues 1–23 are disordered; that stretch reads MTDSSNEHETENPSVPNPDNEIQ.

Belongs to the GrpE family. In terms of assembly, homodimer.

Its subcellular location is the cytoplasm. Participates actively in the response to hyperosmotic and heat shock by preventing the aggregation of stress-denatured proteins, in association with DnaK and GrpE. It is the nucleotide exchange factor for DnaK and may function as a thermosensor. Unfolded proteins bind initially to DnaJ; upon interaction with the DnaJ-bound protein, DnaK hydrolyzes its bound ATP, resulting in the formation of a stable complex. GrpE releases ADP from DnaK; ATP binding to DnaK triggers the release of the substrate protein, thus completing the reaction cycle. Several rounds of ATP-dependent interactions between DnaJ, DnaK and GrpE are required for fully efficient folding. This Chlamydia felis (strain Fe/C-56) (Chlamydophila felis) protein is Protein GrpE.